We begin with the raw amino-acid sequence, 247 residues long: ATP synthase subunit a 1 (247 aa).

The next 6 helical transmembrane spans lie at 32-52 (YMLL…RALV), 82-102 (FFPL…VGII), 112-132 (IIVT…YGFY), 141-161 (LFVP…IEII), 181-201 (GHVT…LGFV), and 206-226 (ALLP…VAFL).

Belongs to the ATPase A chain family. F-type ATPases have 2 components, CF(1) - the catalytic core - and CF(0) - the membrane proton channel. CF(1) has five subunits: alpha(3), beta(3), gamma(1), delta(1), epsilon(1). CF(0) has four main subunits: a, b, b' and c.

Its subcellular location is the cell inner membrane. Functionally, key component of the proton channel; it plays a direct role in the translocation of protons across the membrane. This chain is ATP synthase subunit a 1, found in Bradyrhizobium sp. (strain BTAi1 / ATCC BAA-1182).